The primary structure comprises 597 residues: Alpha-1,2-mannosyltransferase MNN2 (597 aa).

The Cytoplasmic segment spans residues 1–6 (MIAKQK). The chain crosses the membrane as a helical span at residues 7-27 (IKILIGVIIVIATYHFIVSSN). At 28–597 (VRSKDLSDLV…ETAEIPTVVS (570 aa)) the chain is on the extracellular side. Residues 39–89 (LGSSDKSTTENERPKNNIVTNNRLDNPPNEDIPHAEPDSPPQEPPKSGNKP) form a disordered region. N382 carries an N-linked (GlcNAc...) asparagine glycan.

This sequence belongs to the MNN1/MNT family. Mn(2+) serves as cofactor.

The protein localises to the golgi apparatus membrane. It participates in protein modification; protein glycosylation. Its activity is regulated as follows. Enzyme activity is regulated by iron. Functionally, alpha-1,2-mannosyltransferase required for cell wall integrity. Responsible for addition of the first alpha-1,2-linked mannose to form the branches on the mannan backbone of oligosaccharides. Addition of alpha-1,2-mannose is required for stabilization of the alpha-1,6-mannose backbone and hence regulates mannan fibril length; and is important for both immune recognition and virulence. Promotes iron uptake and usage along the endocytosis pathway under iron-limiting conditions. The sequence is that of Alpha-1,2-mannosyltransferase MNN2 (MNN2) from Candida albicans (strain SC5314 / ATCC MYA-2876) (Yeast).